A 208-amino-acid chain; its full sequence is Large ribosomal subunit protein uL3 (208 aa).

Residues 122–148 are disordered; that stretch reads KRHGQSRGPMAHGSRYHRRPGSMGPVA.

This sequence belongs to the universal ribosomal protein uL3 family. In terms of assembly, part of the 50S ribosomal subunit. Forms a cluster with proteins L14 and L19.

Functionally, one of the primary rRNA binding proteins, it binds directly near the 3'-end of the 23S rRNA, where it nucleates assembly of the 50S subunit. The protein is Large ribosomal subunit protein uL3 of Streptococcus pyogenes serotype M1.